The chain runs to 209 residues: MDWDNVAAEDVIEALREVEWSTPPRSFGEFFSRFAFPRSFSKWKSRLKCNLYYYRTNYFILVIFVLGLALVTRPLALVGAALTALSIAFLNDSFAASFNEKFIRTIRHFSPHMAAKMRPPHMPVIRGRSTARKTVYVCGKPRWVFVITFLTASLVMWFSSCGLLWVLYALLTSLAVIIVHASIRTPNLKARLNTFREEFRAVWRNYSEL.

A run of 4 helical transmembrane segments spans residues 51 to 72 (LYYY…ALVT), 76 to 98 (ALVG…AASF), 142 to 162 (RWVF…SSCG), and 163 to 183 (LLWV…HASI).

The protein belongs to the PRA1 family.

The protein localises to the endosome membrane. May be involved in both secretory and endocytic intracellular trafficking in the endosomal/prevacuolar compartments. The polypeptide is PRA1 family protein A2 (PRA1A2) (Arabidopsis thaliana (Mouse-ear cress)).